A 193-amino-acid chain; its full sequence is Probable type II restriction enzyme HpyAORF263P (193 aa).

The protein belongs to the BsaWI type II restriction endonuclease family.

The catalysed reaction is Endonucleolytic cleavage of DNA to give specific double-stranded fragments with terminal 5'-phosphates.. A P subtype probable restriction enzyme that recognizes the double-stranded sequence CCGG; the cleavage site is unknown. The sequence is that of Probable type II restriction enzyme HpyAORF263P from Helicobacter pylori (strain ATCC 700392 / 26695) (Campylobacter pylori).